The chain runs to 173 residues: Alpha-crystallin A chain (173 aa).

The residue at position 1 (Met1) is an N-acetylmethionine. Residues 1–63 (MDVTIQHPWF…RTVLDSGISE (63 aa)) form a required for complex formation with BFSP1 and BFSP2 region. At Gln6 the chain carries Deamidated glutamine; partial. Ser45 is modified (phosphoserine). Deamidated glutamine; partial is present on Gln50. One can recognise a sHSP domain in the interval 52 to 162 (LFRTVLDSGI…GPSERAIPVS (111 aa)). N6-acetyllysine is present on residues Lys70 and Lys99. Residues His100, Glu102, and His107 each contribute to the Zn(2+) site. The interval 145-173 (KVASGLDAGPSERAIPVSREEKPSSAPSS) is disordered. Residue Ser162 is glycosylated (O-linked (GlcNAc) serine).

The protein belongs to the small heat shock protein (HSP20) family. As to quaternary structure, heteromer composed of three CRYAA and one CRYAB subunits. Zinc coordination is achieved at least by His-100, Glu-102 and His-107. His-100 and Glu-102 come from the same molecule within the oligomer, while His-107 residue is provided by another molecule. Inter-subunit bridging via zinc ions enhances stability, which is crucial as there is no protein turn over in the lens. Can also form homodimers and homotetramers (dimers of dimers) which serve as the building blocks of homooligomers. Part of a complex required for lens intermediate filament formation composed of BFSP1, BFSP2 and CRYAA. In terms of processing, acetylation at Lys-70 may increase chaperone activity. Post-translationally, undergoes age-dependent proteolytical cleavage at the C-terminus.

It is found in the cytoplasm. The protein resides in the nucleus. In terms of biological role, contributes to the transparency and refractive index of the lens. Acts as a chaperone, preventing aggregation of various proteins under a wide range of stress conditions. Required for the correct formation of lens intermediate filaments as part of a complex composed of BFSP1, BFSP2 and CRYAA. The chain is Alpha-crystallin A chain (CRYAA) from Erinaceus europaeus (Western European hedgehog).